The primary structure comprises 122 residues: Small ribosomal subunit protein uS13 (122 aa).

A disordered region spans residues 94-122; that stretch reads RGLPVRGQKTKTNARTRKGPRKTVAGKRK.

Belongs to the universal ribosomal protein uS13 family. Part of the 30S ribosomal subunit. Forms a loose heterodimer with protein S19. Forms two bridges to the 50S subunit in the 70S ribosome.

Located at the top of the head of the 30S subunit, it contacts several helices of the 16S rRNA. In the 70S ribosome it contacts the 23S rRNA (bridge B1a) and protein L5 of the 50S subunit (bridge B1b), connecting the 2 subunits; these bridges are implicated in subunit movement. Contacts the tRNAs in the A and P-sites. The polypeptide is Small ribosomal subunit protein uS13 (Syntrophotalea carbinolica (strain DSM 2380 / NBRC 103641 / GraBd1) (Pelobacter carbinolicus)).